The chain runs to 902 residues: Respiratory nitrate reductase alpha chain (902 aa).

The [4Fe-4S] cluster site is built by His-29, Cys-33, and Cys-37.

It belongs to the prokaryotic molybdopterin-containing oxidoreductase family. As to quaternary structure, heterotrimer composed of an alpha, a beta and a gamma chain. Alpha and beta are catalytic chains; gamma chains are involved in binding the enzyme complex to the cytoplasmic membrane. [4Fe-4S] cluster is required as a cofactor. The cofactor is Mo-bis(molybdopterin guanine dinucleotide).

It localises to the cell membrane. Its subcellular location is the cytoplasm. The catalysed reaction is nitrate + a quinol = a quinone + nitrite + H2O. Its activity is regulated as follows. Inhibited by micromolar concentrations of azide. Its function is as follows. The nitrate reductase enzyme complex allows Bradyrhizobium sp. USDA 3045 to use nitrate as an electron acceptor during anaerobic growth. The alpha chain is the actual site of nitrate reduction. This is Respiratory nitrate reductase alpha chain (narG) from Bradyrhizobium sp.